Consider the following 126-residue polypeptide: Aspartate 1-decarboxylase (126 aa).

Ser25 (schiff-base intermediate with substrate; via pyruvic acid) is an active-site residue. The residue at position 25 (Ser25) is a Pyruvic acid (Ser). Thr57 serves as a coordination point for substrate. The Proton donor role is filled by Tyr58. Position 73-75 (73-75 (GAA)) interacts with substrate.

The protein belongs to the PanD family. In terms of assembly, heterooctamer of four alpha and four beta subunits. Pyruvate is required as a cofactor. Post-translationally, is synthesized initially as an inactive proenzyme, which is activated by self-cleavage at a specific serine bond to produce a beta-subunit with a hydroxyl group at its C-terminus and an alpha-subunit with a pyruvoyl group at its N-terminus.

The protein resides in the cytoplasm. The catalysed reaction is L-aspartate + H(+) = beta-alanine + CO2. It functions in the pathway cofactor biosynthesis; (R)-pantothenate biosynthesis; beta-alanine from L-aspartate: step 1/1. Its function is as follows. Catalyzes the pyruvoyl-dependent decarboxylation of aspartate to produce beta-alanine. This is Aspartate 1-decarboxylase from Cronobacter sakazakii (strain ATCC BAA-894) (Enterobacter sakazakii).